The chain runs to 722 residues: Transmembrane channel-like protein 8 (722 aa).

Residues 1–21 (MFRQWSVQSGPAPRRPESQAA) are disordered. At 1–118 (MFRQWSVQSG…GIQSYFTFLR (118 aa)) the chain is on the cytoplasmic side. Residues S6 and S18 each carry the phosphoserine modification. The helical transmembrane segment at 119–139 (FLLLLNLLTMLLTACFVLLPL) threads the bilayer. Residues 140–204 (VWLRPPELGP…AGPESSSEYS (65 aa)) lie on the Lumenal side of the membrane. N-linked (GlcNAc...) asparagine glycosylation occurs at N184. A helical membrane pass occupies residues 205 to 225 (IRLAYLLSPMVCLLLCFCGIL). Residues 226-307 (QRMAEGLPQQ…CRLLTYLRTN (82 aa)) lie on the Cytoplasmic side of the membrane. The chain crosses the membrane as a helical span at residues 308-328 (ILIVLLVVGAISAIFWATKYS). The Lumenal segment spans residues 329–375 (QDNKEESLFLVLQYLPPGVISLVNFLGPQLFTVLIQLENYPPGTEVN). Residues 366–534 (ENYPPGTEVN…SPRRFRASSS (169 aa)) are TMC domain. N375 carries N-linked (GlcNAc...) asparagine glycosylation. A helical membrane pass occupies residues 376 to 396 (LTLIWCVVLKLASLGMFSFSL). Residues 397–430 (GQTVLCIGRNKTSCESYGYNACDYQCWENSVGEE) are Cytoplasmic-facing. A helical transmembrane segment spans residues 431-451 (LYKLIIFNFLLTVAFAFLVSL). Over 452–492 (PRRLLVERFSGWFWTWLDREEFLVPKNVLDIVAAQTVTWMG) the chain is Lumenal. Residues 493–513 (LFYCPLLPLLNSVFLFLTFYI) traverse the membrane as a helical segment. Residues 514–536 (KKYTLLRNSRASPRRFRASSSTF) are Cytoplasmic-facing. The helical transmembrane segment at 537–557 (FFHLVLLLGLLLAAVPLAYVI) threads the bilayer. The Lumenal segment spans residues 558 to 598 (SSTHSSWDCGLFTNYSAPWQVVPELVALQLPLPSQRALRYL). N571 carries an N-linked (GlcNAc...) asparagine glycan. Residues 599–619 (SSHAFSFPLLILLSIVLTVCI) form a helical membrane-spanning segment. Residues 620-722 (SQSRANARAI…RFHFPSRTEL (103 aa)) are Cytoplasmic-facing. Residues S658, S663, and S673 each carry the phosphoserine modification. The segment at 658 to 722 (SPEPGSPHSR…RFHFPSRTEL (65 aa)) is disordered. The segment covering 678–687 (FPCPGSPGPR) has biased composition (pro residues). Over residues 689 to 712 (PRLAPSNRLSSSSLGAPSASVPAS) the composition is skewed to low complexity. S698 carries the phosphoserine modification.

It belongs to the TMC family. In terms of assembly, interacts with TMC6. Interacts and forms a complex with TMC6 and CIB1; the interaction stabilizes each component of the complex. Interacts and forms a complex with TMC6 and SLC30A1/ZNT1; the interaction regulates zinc transport into the ER. Interacts with TRADD; the interaction competes with TRADD/RIPK1/TRAF2/cIAPs complex I formation and facilites complex II formation. As to expression, expressed in thymus, lung, prostate, placenta, testis and spleen. Expressed in lymphocytes and peripheral lymphocytes.

Its subcellular location is the endoplasmic reticulum membrane. The protein resides in the golgi apparatus membrane. It localises to the nucleus membrane. Its function is as follows. Acts as a regulatory protein involved in the regulation of numerous cellular processes. Together with its homolog TMC6/EVER1, forms a complex with calcium-binding protein CIB1 in lymphocytes and keratynocytes where TMC6 and TMC8 stabilize CIB1 levels and reciprocally. Together with TMC6, also forms a complex with and activates zinc transporter ZNT1 at the ER membrane of keratynocytes, thereby facilitating zinc uptake into the ER. Also inhibits receptor-mediated calcium release from ER stores and calcium activated and volume regulated chloride channels. Down-regulates the activity of transcription factors induced by zinc and cytokines. Also sequesters TRADD which impairs the recruitment of TRAF2 and RIPK1 in the pro-survival complex I and promotes proapoptotic complex II formation, and may therefore be involved in TNF-induced cell death/survival decisions. This chain is Transmembrane channel-like protein 8, found in Mus musculus (Mouse).